Here is a 601-residue protein sequence, read N- to C-terminus: Glutamyl-tRNA(Gln) amidotransferase subunit B, mitochondrial (601 aa).

The N-terminal 52 residues, 1–52, are a transit peptide targeting the mitochondrion; that stretch reads MLQQWLRQSPGAARFLRGSCCRGPQSGSLRHSPLPTAPHRCIRSLQTSATES.

Belongs to the GatB/GatE family. GatB subfamily. In terms of assembly, subunit of the heterotrimeric GatCAB amidotransferase (AdT) complex, composed of A, B and C subunits.

It is found in the mitochondrion. The enzyme catalyses L-glutamyl-tRNA(Gln) + L-glutamine + ATP + H2O = L-glutaminyl-tRNA(Gln) + L-glutamate + ADP + phosphate + H(+). Its function is as follows. Allows the formation of correctly charged Gln-tRNA(Gln) through the transamidation of misacylated Glu-tRNA(Gln) in the mitochondria. The reaction takes place in the presence of glutamine and ATP through an activated gamma-phospho-Glu-tRNA(Gln). The polypeptide is Glutamyl-tRNA(Gln) amidotransferase subunit B, mitochondrial (Neosartorya fischeri (strain ATCC 1020 / DSM 3700 / CBS 544.65 / FGSC A1164 / JCM 1740 / NRRL 181 / WB 181) (Aspergillus fischerianus)).